The following is a 212-amino-acid chain: Redox-sensing transcriptional repressor Rex (212 aa).

A DNA-binding region (H-T-H motif) is located at residues L17–F56. Position 91–96 (G91–G96) interacts with NAD(+).

This sequence belongs to the transcriptional regulatory Rex family. In terms of assembly, homodimer.

Its subcellular location is the cytoplasm. Functionally, modulates transcription in response to changes in cellular NADH/NAD(+) redox state. The chain is Redox-sensing transcriptional repressor Rex from Chloroflexus aggregans (strain MD-66 / DSM 9485).